Consider the following 293-residue polypeptide: Acetylglutamate kinase (293 aa).

Substrate-binding positions include 60–61 (GG), Arg-82, and Asn-188.

It belongs to the acetylglutamate kinase family. ArgB subfamily.

Its subcellular location is the cytoplasm. It carries out the reaction N-acetyl-L-glutamate + ATP = N-acetyl-L-glutamyl 5-phosphate + ADP. The protein operates within amino-acid biosynthesis; L-arginine biosynthesis; N(2)-acetyl-L-ornithine from L-glutamate: step 2/4. Its function is as follows. Catalyzes the ATP-dependent phosphorylation of N-acetyl-L-glutamate. The protein is Acetylglutamate kinase of Methanothermobacter thermautotrophicus (strain ATCC 29096 / DSM 1053 / JCM 10044 / NBRC 100330 / Delta H) (Methanobacterium thermoautotrophicum).